Here is a 98-residue protein sequence, read N- to C-terminus: Large ribosomal subunit protein uL23 (98 aa).

The protein belongs to the universal ribosomal protein uL23 family. Part of the 50S ribosomal subunit. Contacts protein L29, and trigger factor when it is bound to the ribosome.

Its function is as follows. One of the early assembly proteins it binds 23S rRNA. One of the proteins that surrounds the polypeptide exit tunnel on the outside of the ribosome. Forms the main docking site for trigger factor binding to the ribosome. This chain is Large ribosomal subunit protein uL23, found in Clostridium botulinum (strain Eklund 17B / Type B).